Consider the following 241-residue polypeptide: dTTP/UTP pyrophosphatase (241 aa).

Ser38 is subject to Phosphoserine. Residue Asp105 is the Proton acceptor of the active site.

The protein belongs to the Maf family. YhdE subfamily. It depends on a divalent metal cation as a cofactor.

It localises to the cytoplasm. It is found in the nucleus. The catalysed reaction is dTTP + H2O = dTMP + diphosphate + H(+). The enzyme catalyses UTP + H2O = UMP + diphosphate + H(+). In terms of biological role, nucleoside triphosphate pyrophosphatase that hydrolyzes dTTP and UTP. May have a dual role in cell division arrest and in preventing the incorporation of modified nucleotides into cellular nucleic acids. The sequence is that of dTTP/UTP pyrophosphatase from Schizosaccharomyces pombe (strain 972 / ATCC 24843) (Fission yeast).